Here is a 178-residue protein sequence, read N- to C-terminus: SPbeta prophage-derived uncharacterized protein YonC (178 aa).

This Bacillus subtilis (strain 168) protein is SPbeta prophage-derived uncharacterized protein YonC (yonC).